A 434-amino-acid chain; its full sequence is Serine--tRNA ligase (434 aa).

239–241 (TAE) contacts L-serine. ATP is bound at residue 270–272 (RSE). Position 293 (glutamate 293) interacts with L-serine. 357 to 360 (EISS) contacts ATP. An L-serine-binding site is contributed by serine 393.

This sequence belongs to the class-II aminoacyl-tRNA synthetase family. Type-1 seryl-tRNA synthetase subfamily. In terms of assembly, homodimer. The tRNA molecule binds across the dimer.

Its subcellular location is the cytoplasm. The catalysed reaction is tRNA(Ser) + L-serine + ATP = L-seryl-tRNA(Ser) + AMP + diphosphate + H(+). It carries out the reaction tRNA(Sec) + L-serine + ATP = L-seryl-tRNA(Sec) + AMP + diphosphate + H(+). The protein operates within aminoacyl-tRNA biosynthesis; selenocysteinyl-tRNA(Sec) biosynthesis; L-seryl-tRNA(Sec) from L-serine and tRNA(Sec): step 1/1. Catalyzes the attachment of serine to tRNA(Ser). Is also able to aminoacylate tRNA(Sec) with serine, to form the misacylated tRNA L-seryl-tRNA(Sec), which will be further converted into selenocysteinyl-tRNA(Sec). The chain is Serine--tRNA ligase from Mesorhizobium japonicum (strain LMG 29417 / CECT 9101 / MAFF 303099) (Mesorhizobium loti (strain MAFF 303099)).